Reading from the N-terminus, the 531-residue chain is Peptide chain release factor 3 (531 aa).

In terms of domain architecture, tr-type G spans Arg-10 to Lys-278. GTP is bound by residues Ser-19 to Thr-26, Asp-87 to His-91, and Asn-141 to Asp-144.

The protein belongs to the TRAFAC class translation factor GTPase superfamily. Classic translation factor GTPase family. PrfC subfamily.

It localises to the cytoplasm. Functionally, increases the formation of ribosomal termination complexes and stimulates activities of RF-1 and RF-2. It binds guanine nucleotides and has strong preference for UGA stop codons. It may interact directly with the ribosome. The stimulation of RF-1 and RF-2 is significantly reduced by GTP and GDP, but not by GMP. The sequence is that of Peptide chain release factor 3 from Neisseria meningitidis serogroup C / serotype 2a (strain ATCC 700532 / DSM 15464 / FAM18).